Consider the following 379-residue polypeptide: Cytochrome b (379 aa).

4 consecutive transmembrane segments (helical) span residues 33–53 (FGSLLGVCLMIQILTGLFLAM), 77–98 (WLIRYLHANGASMFFICLFIHV), 113–133 (WNIGIILFLTTMATAFVGYVL), and 178–198 (FFAFHFILPFIITAFVLVHLL). Heme b-binding residues include histidine 83 and histidine 97. Heme b-binding residues include histidine 182 and histidine 196. Histidine 201 provides a ligand contact to a ubiquinone. 4 helical membrane-spanning segments follow: residues 226–246 (IKDLLGILFLLMALMILALFF), 288–308 (LGGVLALLLSIIILAAFPLLN), 320–340 (VTQTIYWIFIANLLVLTWIGG), and 347–367 (FTMIGQIASVIYFATIIVLMP).

The protein belongs to the cytochrome b family. The cytochrome bc1 complex contains 11 subunits: 3 respiratory subunits (MT-CYB, CYC1 and UQCRFS1), 2 core proteins (UQCRC1 and UQCRC2) and 6 low-molecular weight proteins (UQCRH/QCR6, UQCRB/QCR7, UQCRQ/QCR8, UQCR10/QCR9, UQCR11/QCR10 and a cleavage product of UQCRFS1). This cytochrome bc1 complex then forms a dimer. Heme b is required as a cofactor.

The protein resides in the mitochondrion inner membrane. Component of the ubiquinol-cytochrome c reductase complex (complex III or cytochrome b-c1 complex) that is part of the mitochondrial respiratory chain. The b-c1 complex mediates electron transfer from ubiquinol to cytochrome c. Contributes to the generation of a proton gradient across the mitochondrial membrane that is then used for ATP synthesis. This Akodon iniscatus (Intelligent grass mouse) protein is Cytochrome b (MT-CYB).